The chain runs to 195 residues: MEELPATAIGIKTKDGVVLAAERRLSYGDFVLSKSARKVFKLGRFGIAGAGIVGDIQTLTRIMNVEIKYYEMYNSRKISARAAAKLLSVILYQNKVLPYISELLFGGVDEDGPKLFILDPIGSLIEDSYAAVGSGARVAIGVLEAEYNESLTSEAAKELAIKSMKSAVERDVMSGDGIDILIINKNNIYEDFIKI.

A propeptide spans 1-6 (MEELPA) (removed in mature form; by autocatalysis). Thr7 (nucleophile) is an active-site residue.

Belongs to the peptidase T1B family. As to quaternary structure, the 20S proteasome core is composed of 14 alpha and 14 beta subunits that assemble into four stacked heptameric rings, resulting in a barrel-shaped structure. The two inner rings, each composed of seven catalytic beta subunits, are sandwiched by two outer rings, each composed of seven alpha subunits. The catalytic chamber with the active sites is on the inside of the barrel. Has a gated structure, the ends of the cylinder being occluded by the N-termini of the alpha-subunits. Is capped at one or both ends by the proteasome regulatory ATPase, PAN.

It is found in the cytoplasm. The catalysed reaction is Cleavage of peptide bonds with very broad specificity.. With respect to regulation, the formation of the proteasomal ATPase PAN-20S proteasome complex, via the docking of the C-termini of PAN into the intersubunit pockets in the alpha-rings, triggers opening of the gate for substrate entry. Interconversion between the open-gate and close-gate conformations leads to a dynamic regulation of the 20S proteasome proteolysis activity. Component of the proteasome core, a large protease complex with broad specificity involved in protein degradation. The protein is Proteasome subunit beta 1 of Sulfolobus acidocaldarius (strain ATCC 33909 / DSM 639 / JCM 8929 / NBRC 15157 / NCIMB 11770).